Reading from the N-terminus, the 355-residue chain is GTPase Obg (355 aa).

Positions 1–159 (MKLVDEAEIL…RLLKLELKLL (159 aa)) constitute an Obg domain. The OBG-type G domain occupies 160–342 (ADVGLLGFPN…IMKDVMAFFD (183 aa)). GTP-binding positions include 166-173 (GFPNAGKS), 191-195 (FTTLY), 213-216 (DVPG), 292-295 (NKAD), and 323-325 (SAL). Serine 173 and threonine 193 together coordinate Mg(2+).

This sequence belongs to the TRAFAC class OBG-HflX-like GTPase superfamily. OBG GTPase family. Monomer. It depends on Mg(2+) as a cofactor.

The protein resides in the cytoplasm. Its function is as follows. An essential GTPase which binds GTP, GDP and possibly (p)ppGpp with moderate affinity, with high nucleotide exchange rates and a fairly low GTP hydrolysis rate. Plays a role in control of the cell cycle, stress response, ribosome biogenesis and in those bacteria that undergo differentiation, in morphogenesis control. The protein is GTPase Obg of Xanthomonas euvesicatoria pv. vesicatoria (strain 85-10) (Xanthomonas campestris pv. vesicatoria).